The sequence spans 215 residues: UPF0502 protein YceH (215 aa).

Lys80 bears the N6-acetyllysine mark.

It belongs to the UPF0502 family.

The protein is UPF0502 protein YceH of Shigella sonnei (strain Ss046).